Here is a 2321-residue protein sequence, read N- to C-terminus: Major viral transcription factor ICP4 homolog (2321 aa).

7 disordered regions span residues 19–183 (GIFP…SPPL), 296–329 (ILHT…PAPI), 350–438 (EFIQ…PSLG), 954–1180 (MDDD…SGLA), 1360–1392 (DNSS…APPH), 1597–1841 (LLND…PSCY), and 2277–2321 (QHEE…TFTD). The span at 114-147 (SSNRPGGRNSSNGADESGESSSDRSPSYSPCDSY) shows a compositional bias: low complexity. Composition is skewed to pro residues over residues 302–329 (PTPP…PAPI) and 355–367 (QSPP…PSPP). The span at 368 to 389 (AHSSSSCSPSHLAPSPLSSSPL) shows a compositional bias: low complexity. A compositionally biased stretch (pro residues) spans 390 to 410 (SSPPQLSPAPVSPPSSPPPLS). Composition is skewed to polar residues over residues 424 to 433 (SISSQPQSCP) and 1002 to 1011 (PRLTTPSSGR). Residues 1031–1093 (PETSPSNEHI…PSSPSSSRSP (63 aa)) show a composition bias toward low complexity. Over residues 1151 to 1161 (GGGRPRGRPPK) the composition is skewed to basic residues. Polar residues-rich tracts occupy residues 1169 to 1180 (NDIQVTSSSGLA) and 1371 to 1389 (SKPS…QTTA). Positions 1630–1644 (STSSSQSASDKSPIK) are enriched in low complexity. Composition is skewed to polar residues over residues 1720-1743 (KAQT…QSSS) and 1801-1816 (VGQT…HDIL). Residues 1817-1839 (SSSLPNRSCSSSPSPSKRPYHPS) show a composition bias toward low complexity.

The protein belongs to the herpesviridae ICP4 family. In terms of processing, a long stretch of serine residues may be a major site of phosphorylation.

The protein resides in the host nucleus. This IE protein is a multifunctional protein capable of migrating to the nucleus, binding to DNA, trans-activating other viral genes, and autoregulating its own synthesis. It is required for the switch from immediate-early to early mode of gene expression. This chain is Major viral transcription factor ICP4 homolog (MDV084), found in Gallus gallus (Chicken).